We begin with the raw amino-acid sequence, 179 residues long: Large ribosomal subunit protein uL5 (179 aa).

This sequence belongs to the universal ribosomal protein uL5 family. As to quaternary structure, part of the 50S ribosomal subunit; part of the 5S rRNA/L5/L18/L25 subcomplex. Contacts the 5S rRNA and the P site tRNA. Forms a bridge to the 30S subunit in the 70S ribosome.

Its function is as follows. This is one of the proteins that bind and probably mediate the attachment of the 5S RNA into the large ribosomal subunit, where it forms part of the central protuberance. In the 70S ribosome it contacts protein S13 of the 30S subunit (bridge B1b), connecting the 2 subunits; this bridge is implicated in subunit movement. Contacts the P site tRNA; the 5S rRNA and some of its associated proteins might help stabilize positioning of ribosome-bound tRNAs. The protein is Large ribosomal subunit protein uL5 of Delftia acidovorans (strain DSM 14801 / SPH-1).